A 309-amino-acid polypeptide reads, in one-letter code: Phosphoserine phosphatase (309 aa).

D97 acts as the Nucleophile in catalysis. Mg(2+)-binding residues include D97 and D99. Catalysis depends on D99, which acts as the Proton donor. Substrate contacts are provided by residues E106, R142, 186–187, and K232; that span reads SG. D255 provides a ligand contact to Mg(2+). A substrate-binding site is contributed by N258.

It belongs to the HAD-like hydrolase superfamily. SerB family. It depends on Mg(2+) as a cofactor.

The enzyme catalyses O-phospho-L-serine + H2O = L-serine + phosphate. It catalyses the reaction O-phospho-D-serine + H2O = D-serine + phosphate. Its pathway is amino-acid biosynthesis; L-serine biosynthesis; L-serine from 3-phospho-D-glycerate: step 3/3. The protein is Phosphoserine phosphatase (SER2) of Saccharomyces cerevisiae (strain ATCC 204508 / S288c) (Baker's yeast).